The chain runs to 110 residues: UPF0122 protein RBAM_015800 (110 aa).

The protein belongs to the UPF0122 family.

Might take part in the signal recognition particle (SRP) pathway. This is inferred from the conservation of its genetic proximity to ftsY/ffh. May be a regulatory protein. This is UPF0122 protein RBAM_015800 from Bacillus velezensis (strain DSM 23117 / BGSC 10A6 / LMG 26770 / FZB42) (Bacillus amyloliquefaciens subsp. plantarum).